A 504-amino-acid chain; its full sequence is Acid phosphatase A (504 aa).

An N-terminal signal peptide occupies residues 1–22 (MYTLLDILKGLPLLAVAAIASA). N-linked (GlcNAc...) asparagine glycans are attached at residues asparagine 84, asparagine 112, asparagine 168, asparagine 260, asparagine 415, asparagine 450, and asparagine 474.

This sequence belongs to the metallophosphoesterase superfamily. Purple acid phosphatase family. As to quaternary structure, monomer.

The protein resides in the secreted. The catalysed reaction is a phosphate monoester + H2O = an alcohol + phosphate. In terms of biological role, acid phosphatase involved in the regulation of fungal phenotypic traits and virulence in C.parasitica. The sequence is that of Acid phosphatase A from Cryphonectria parasitica (strain ATCC 38755 / EP155).